Reading from the N-terminus, the 293-residue chain is Ribosomal protein L11 methyltransferase (293 aa).

4 residues coordinate S-adenosyl-L-methionine: Thr145, Gly166, Asp188, and Asn230.

Belongs to the methyltransferase superfamily. PrmA family.

The protein resides in the cytoplasm. It carries out the reaction L-lysyl-[protein] + 3 S-adenosyl-L-methionine = N(6),N(6),N(6)-trimethyl-L-lysyl-[protein] + 3 S-adenosyl-L-homocysteine + 3 H(+). Functionally, methylates ribosomal protein L11. This Shewanella woodyi (strain ATCC 51908 / MS32) protein is Ribosomal protein L11 methyltransferase.